The chain runs to 466 residues: Ras-GEF domain-containing family member 1C (466 aa).

A disordered region spans residues 1 to 37 (MPQTLSASDMVTPGSLSPPPTEPTDGEQAGQPLLDGA). In terms of domain architecture, N-terminal Ras-GEF spans 34–164 (LDGAPSSASL…LLQALHQKLA (131 aa)). Positions 200–446 (DPYTLAQQLT…YLASYESESP (247 aa)) constitute a Ras-GEF domain.

In terms of biological role, guanine nucleotide exchange factor (GEF). This Homo sapiens (Human) protein is Ras-GEF domain-containing family member 1C (RASGEF1C).